The following is a 493-amino-acid chain: Aluminum-activated malate transporter 1 (493 aa).

Helical transmembrane passes span 28-48 (VGLA…GPFT), 51-71 (FGIN…FSVG), 104-124 (TVEP…STFV), 133-153 (KFDY…LSGF), and 169-189 (VVIG…VWAG). A phosphoserine mark is found at S320 and S327. T385 carries the phosphothreonine modification. Basic and acidic residues predominate over residues 441 to 452 (DNDRSNNVDDSR). The tract at residues 441-460 (DNDRSNNVDDSRGGSSQDSC) is disordered.

This sequence belongs to the aromatic acid exporter (TC 2.A.85) family. Phosphorylated. A reversible phosphorylation is required for activation. As to expression, expressed in roots, but not in shoots. Detected in the root apex in absence of aluminum stress and in root apices, the stele and endodermis of the elongating zone of primary and lateral roots after aluminum stress. Not expressed in cortical and epidermal cells.

The protein resides in the cell membrane. With respect to regulation, activated by external aluminum. Malate transporter critical for aluminum tolerance. The STOP1 transcription factor is required for ALMT1 expression. The polypeptide is Aluminum-activated malate transporter 1 (ALMT1) (Arabidopsis thaliana (Mouse-ear cress)).